Here is a 514-residue protein sequence, read N- to C-terminus: 2-isopropylmalate synthase (514 aa).

The 264-residue stretch at 5-268 (LIIFDTTLRD…DVGIDTSQIV (264 aa)) folds into the Pyruvate carboxyltransferase domain. Mn(2+) contacts are provided by Asp14, His202, His204, and Asn239. Residues 395–514 (KFVSLSQHSE…KDDKVNPQRS (120 aa)) form a regulatory domain region.

This sequence belongs to the alpha-IPM synthase/homocitrate synthase family. LeuA type 1 subfamily. In terms of assembly, homodimer. The cofactor is Mn(2+).

It is found in the cytoplasm. The catalysed reaction is 3-methyl-2-oxobutanoate + acetyl-CoA + H2O = (2S)-2-isopropylmalate + CoA + H(+). Its pathway is amino-acid biosynthesis; L-leucine biosynthesis; L-leucine from 3-methyl-2-oxobutanoate: step 1/4. Functionally, catalyzes the condensation of the acetyl group of acetyl-CoA with 3-methyl-2-oxobutanoate (2-ketoisovalerate) to form 3-carboxy-3-hydroxy-4-methylpentanoate (2-isopropylmalate). In Burkholderia lata (strain ATCC 17760 / DSM 23089 / LMG 22485 / NCIMB 9086 / R18194 / 383), this protein is 2-isopropylmalate synthase.